The sequence spans 726 residues: 1,4-alpha-glucan branching enzyme GlgB (726 aa).

Aspartate 407 acts as the Nucleophile in catalysis. Residue glutamate 460 is the Proton donor of the active site.

Belongs to the glycosyl hydrolase 13 family. GlgB subfamily. In terms of assembly, monomer.

The enzyme catalyses Transfers a segment of a (1-&gt;4)-alpha-D-glucan chain to a primary hydroxy group in a similar glucan chain.. It functions in the pathway glycan biosynthesis; glycogen biosynthesis. Catalyzes the formation of the alpha-1,6-glucosidic linkages in glycogen by scission of a 1,4-alpha-linked oligosaccharide from growing alpha-1,4-glucan chains and the subsequent attachment of the oligosaccharide to the alpha-1,6 position. The sequence is that of 1,4-alpha-glucan branching enzyme GlgB from Hydrogenovibrio crunogenus (strain DSM 25203 / XCL-2) (Thiomicrospira crunogena).